A 378-amino-acid polypeptide reads, in one-letter code: DNA replication and repair protein RecF (378 aa).

30–37 (GRNGQGKT) lines the ATP pocket.

Belongs to the RecF family.

The protein localises to the cytoplasm. The RecF protein is involved in DNA metabolism; it is required for DNA replication and normal SOS inducibility. RecF binds preferentially to single-stranded, linear DNA. It also seems to bind ATP. The protein is DNA replication and repair protein RecF of Frankia alni (strain DSM 45986 / CECT 9034 / ACN14a).